We begin with the raw amino-acid sequence, 722 residues long: Probable dipeptidyl-peptidase 5 (722 aa).

Positions 1–18 are cleaved as a signal peptide; it reads MGALRWLSLAAAASSALA. Residues asparagine 75, asparagine 78, asparagine 86, asparagine 94, asparagine 151, asparagine 253, and asparagine 448 are each glycosylated (N-linked (GlcNAc...) asparagine). The Charge relay system role is filled by serine 558. Asparagine 605 carries N-linked (GlcNAc...) asparagine glycosylation. Active-site charge relay system residues include aspartate 641 and histidine 673.

The protein belongs to the peptidase S9C family.

It localises to the secreted. Its function is as follows. Extracellular dipeptidyl-peptidase which removes N-terminal dipeptides sequentially from polypeptides having unsubstituted N-termini. In Emericella nidulans (strain FGSC A4 / ATCC 38163 / CBS 112.46 / NRRL 194 / M139) (Aspergillus nidulans), this protein is Probable dipeptidyl-peptidase 5 (dpp5).